Consider the following 285-residue polypeptide: MSTIIDGKAIAAKLRAEIATEVKILKEKGIIPGLATVLVGEDPASEVYVRMKGNACQELGMHSVKHTLPATTTEAELLALVARLNSDPTIHGILVQLPLPKQINSDTILEAISPVKDVDGFHPYNVGRLMVGKPTFQPCTPYGVMVMLREAGVDLAGKEVVVVGRSNIVGKPVALMCLQQHATVTICHSKTRDLPSKVKEADVVIAAVGVPEMIKGEWIKEGAVVIDVGVNRVGEKKLVGDVEFAAASQRASAITPVPGGVGPMTITMLLYNTLEAAKKTGEGNR.

NADP(+) contacts are provided by residues 164–166, Ser189, and Val230; that span reads GRS.

This sequence belongs to the tetrahydrofolate dehydrogenase/cyclohydrolase family. In terms of assembly, homodimer.

It catalyses the reaction (6R)-5,10-methylene-5,6,7,8-tetrahydrofolate + NADP(+) = (6R)-5,10-methenyltetrahydrofolate + NADPH. The enzyme catalyses (6R)-5,10-methenyltetrahydrofolate + H2O = (6R)-10-formyltetrahydrofolate + H(+). It functions in the pathway one-carbon metabolism; tetrahydrofolate interconversion. Its function is as follows. Catalyzes the oxidation of 5,10-methylenetetrahydrofolate to 5,10-methenyltetrahydrofolate and then the hydrolysis of 5,10-methenyltetrahydrofolate to 10-formyltetrahydrofolate. The sequence is that of Bifunctional protein FolD 2 from Geobacter metallireducens (strain ATCC 53774 / DSM 7210 / GS-15).